Here is a 350-residue protein sequence, read N- to C-terminus: Ion-translocating oxidoreductase complex subunit D (350 aa).

The next 4 helical transmembrane spans lie at 20 to 40 (VMLWVILAALPGLLAQTLFFG), 42 to 62 (GNLINVVWCIALALGSEAAFL), 89 to 109 (LPQFTPWWVSGIAVVSAIVVA), and 120 to 140 (PFNPAMVGYALALISFPVAMT). Position 178 is an FMN phosphoryl threonine (T178). The next 5 helical transmembrane spans lie at 204-224 (LIARGWEWVNLAFLAGGVLLI), 228-248 (IITWHIPVAFLAGIAAMSLAF), 255-275 (YAPLQLHLLAGGTMLGAFFIA), 282-302 (ATSHQGKLIYGAGIGVLVYLI), and 306-326 (GNYPDAVAFSVLLMNFAVPFI).

The protein belongs to the NqrB/RnfD family. In terms of assembly, the complex is composed of six subunits: RnfA, RnfB, RnfC, RnfD, RnfE and RnfG. The cofactor is FMN.

The protein resides in the cell inner membrane. Functionally, part of a membrane-bound complex that couples electron transfer with translocation of ions across the membrane. The protein is Ion-translocating oxidoreductase complex subunit D of Marinobacter nauticus (strain ATCC 700491 / DSM 11845 / VT8) (Marinobacter aquaeolei).